Here is a 275-residue protein sequence, read N- to C-terminus: Chemotaxis protein methyltransferase Cher2 (275 aa).

The CheR-type methyltransferase domain maps to 1-275 (MSTGNLDFEQ…CSPGIIYQAK (275 aa)). S-adenosyl-L-methionine is bound by residues N73, T75, R79, E116, D145, 201-202 (NL), and 218-219 (RN).

In terms of assembly, monomer.

The enzyme catalyses L-glutamyl-[protein] + S-adenosyl-L-methionine = [protein]-L-glutamate 5-O-methyl ester + S-adenosyl-L-homocysteine. In terms of biological role, methylation of the membrane-bound methyl-accepting chemotaxis proteins (MCP) to form gamma-glutamyl methyl ester residues in MCP. Methylates the McpS chemotaxis receptor. This Pseudomonas putida (strain ATCC 47054 / DSM 6125 / CFBP 8728 / NCIMB 11950 / KT2440) protein is Chemotaxis protein methyltransferase Cher2 (cheR2).